Reading from the N-terminus, the 422-residue chain is Acetyl-CoA acetyltransferase, mitochondrial (422 aa).

Residues M1–Y28 constitute a mitochondrion transit peptide. N6-acetyllysine; alternate is present on K61. N6-succinyllysine; alternate is present on K61. The residue at position 73 (K73) is an N6-succinyllysine. The Acyl-thioester intermediate role is filled by C121. Residues K169, K176, K185, and K197 each carry the N6-acetyllysine; alternate modification. An N6-succinyllysine; alternate mark is found at K169, K176, K185, and K197. Y214 contributes to the CoA binding site. A K(+)-binding site is contributed by Y214. N6-acetyllysine; alternate is present on K218. At K218 the chain carries N6-succinyllysine; alternate. An N6-succinyllysine modification is found at K238. An N6-acetyllysine; alternate modification is found at K240. At K240 the chain carries N6-succinyllysine; alternate. Residues K246 and K252 each carry the N6-acetyllysine modification. CoA-binding positions include R253 to D255 and K258. The residue at position 258 (K258) is an N6-acetyllysine; alternate. Residue K258 is modified to N6-succinyllysine; alternate. Residues K261 and K263 each carry the N6-succinyllysine modification. K(+)-binding residues include A275, A276, and A278. S279 contributes to the CoA binding site. Position 333 is an N6-acetyllysine (K333). V376 lines the K(+) pocket. C408 functions as the Proton donor/acceptor in the catalytic mechanism.

Belongs to the thiolase-like superfamily. Thiolase family. Homotetramer. Post-translationally, succinylation at Lys-263, adjacent to a coenzyme A binding site. Desuccinylated by SIRT5.

Its subcellular location is the mitochondrion. The enzyme catalyses 2 acetyl-CoA = acetoacetyl-CoA + CoA. It catalyses the reaction propanoyl-CoA + acetyl-CoA = 2-methyl-3-oxobutanoyl-CoA + CoA. The protein operates within lipid metabolism; fatty acid beta-oxidation. With respect to regulation, activated by potassium ions, but not sodium ions. In terms of biological role, this is one of the enzymes that catalyzes the last step of the mitochondrial beta-oxidation pathway, an aerobic process breaking down fatty acids into acetyl-CoA. Using free coenzyme A/CoA, catalyzes the thiolytic cleavage of medium- to long-chain 3-oxoacyl-CoAs into acetyl-CoA and a fatty acyl-CoA shortened by two carbon atoms. The activity of the enzyme is reversible and it can also catalyze the condensation of two acetyl-CoA molecules into acetoacetyl-CoA. Thereby, it plays a major role in ketone body metabolism. The protein is Acetyl-CoA acetyltransferase, mitochondrial (ACAT1) of Bos taurus (Bovine).